The following is a 500-amino-acid chain: Glycerol kinase (500 aa).

Thr-11 contributes to the ADP binding site. ATP is bound by residues Thr-11, Thr-12, and Ser-13. Sn-glycerol 3-phosphate is bound at residue Thr-11. Arg-15 contributes to the ADP binding site. Sn-glycerol 3-phosphate is bound by residues Arg-81, Glu-82, Tyr-133, and Asp-242. Positions 81, 82, 133, 242, and 243 each coordinate glycerol. ADP is bound by residues Thr-264 and Gly-307. Residues Thr-264, Gly-307, Gln-311, and Gly-411 each contribute to the ATP site. Residue Gly-411 coordinates ADP.

This sequence belongs to the FGGY kinase family.

The enzyme catalyses glycerol + ATP = sn-glycerol 3-phosphate + ADP + H(+). It functions in the pathway polyol metabolism; glycerol degradation via glycerol kinase pathway; sn-glycerol 3-phosphate from glycerol: step 1/1. With respect to regulation, inhibited by fructose 1,6-bisphosphate (FBP). In terms of biological role, key enzyme in the regulation of glycerol uptake and metabolism. Catalyzes the phosphorylation of glycerol to yield sn-glycerol 3-phosphate. The sequence is that of Glycerol kinase from Rhodopseudomonas palustris (strain BisA53).